The following is a 97-amino-acid chain: MAKMSALSIFAIFIILVLVIFEIPEIEAHDSECLKEYGGDVGFGFCAPKIFPTICYRNCQKDKGANGGKCLWGEGGKVKCLCDFCSNESFNQFISLT.

The first 28 residues, 1–28 (MAKMSALSIFAIFIILVLVIFEIPEIEA), serve as a signal peptide directing secretion. Cystine bridges form between Cys-33–Cys-85, Cys-46–Cys-70, Cys-55–Cys-80, and Cys-59–Cys-82.

Belongs to the DEFL family. Protease inhibitor I18 (RTI/MTI-2) subfamily.

The protein localises to the secreted. The polypeptide is Defensin-like protein 196 (ATTI4) (Arabidopsis thaliana (Mouse-ear cress)).